Reading from the N-terminus, the 274-residue chain is Diaminopimelate epimerase (274 aa).

Asn11, Gln44, and Asn64 together coordinate substrate. Cys73 serves as the catalytic Proton donor. Residues 74–75, Asn157, Asn190, and 208–209 each bind substrate; these read GN and ER. Cys217 functions as the Proton acceptor in the catalytic mechanism. 218 to 219 lines the substrate pocket; the sequence is GS.

Belongs to the diaminopimelate epimerase family. As to quaternary structure, homodimer.

The protein resides in the cytoplasm. It catalyses the reaction (2S,6S)-2,6-diaminopimelate = meso-2,6-diaminopimelate. It functions in the pathway amino-acid biosynthesis; L-lysine biosynthesis via DAP pathway; DL-2,6-diaminopimelate from LL-2,6-diaminopimelate: step 1/1. Catalyzes the stereoinversion of LL-2,6-diaminopimelate (L,L-DAP) to meso-diaminopimelate (meso-DAP), a precursor of L-lysine and an essential component of the bacterial peptidoglycan. This is Diaminopimelate epimerase from Proteus mirabilis (strain HI4320).